A 284-amino-acid chain; its full sequence is Bifunctional protein FolD (284 aa).

Residues 164–166 (GRS) and S189 contribute to the NADP(+) site.

It belongs to the tetrahydrofolate dehydrogenase/cyclohydrolase family. As to quaternary structure, homodimer.

It catalyses the reaction (6R)-5,10-methylene-5,6,7,8-tetrahydrofolate + NADP(+) = (6R)-5,10-methenyltetrahydrofolate + NADPH. It carries out the reaction (6R)-5,10-methenyltetrahydrofolate + H2O = (6R)-10-formyltetrahydrofolate + H(+). It functions in the pathway one-carbon metabolism; tetrahydrofolate interconversion. In terms of biological role, catalyzes the oxidation of 5,10-methylenetetrahydrofolate to 5,10-methenyltetrahydrofolate and then the hydrolysis of 5,10-methenyltetrahydrofolate to 10-formyltetrahydrofolate. This chain is Bifunctional protein FolD, found in Listeria monocytogenes serotype 4b (strain F2365).